A 92-amino-acid chain; its full sequence is MTEAAKTETSLRRTLVGRVVSDKMDKTVTVLIENRVKHPLYGKYVLRSKKYHAHDEANQYKEGDKVEIQETRPLSRTKSWVVSRLVEAARVI.

This sequence belongs to the universal ribosomal protein uS17 family. As to quaternary structure, part of the 30S ribosomal subunit.

Functionally, one of the primary rRNA binding proteins, it binds specifically to the 5'-end of 16S ribosomal RNA. This is Small ribosomal subunit protein uS17 from Cupriavidus metallidurans (strain ATCC 43123 / DSM 2839 / NBRC 102507 / CH34) (Ralstonia metallidurans).